We begin with the raw amino-acid sequence, 503 residues long: Potassium voltage-gated channel subfamily V member 1 (503 aa).

2 disordered regions span residues 1 to 20 and 171 to 192; these read MDLS…DSGS and KKDT…QGPC. Over 3-213 the chain is Cytoplasmic; sequence LSPRNRPLLD…EKPGSSTAAR (211 aa). A compositionally biased stretch (low complexity) spans 10–20; the sequence is LLDSSSLDSGS. A compositionally biased stretch (basic and acidic residues) spans 171–184; it reads KKDTDDQESQHESE. Residues 214–234 form a helical membrane-spanning segment; the sequence is IFGVISIIFVAVSIVNMALMS. Over 235 to 241 the chain is Extracellular; the sequence is AELSWLN. The chain crosses the membrane as a helical span at residues 242–262; the sequence is LQLLEILEYVCISWFTGEFIL. The Cytoplasmic portion of the chain corresponds to 263 to 279; the sequence is RFLCVKDRCHFLRKVPN. A helical membrane pass occupies residues 280 to 300; that stretch reads IIDLLAILPFYITLLVESLSG. Residues 301–312 are Extracellular-facing; it reads SHTTQELENVGR. Residues 313–334 form a helical; Voltage-sensor membrane-spanning segment; sequence LVQVLRLLRALRMLKLGRHSTG. Topologically, residues 335–348 are cytoplasmic; that stretch reads LRSLGMTITQCYEE. Residues 349 to 369 traverse the membrane as a helical segment; the sequence is VGLLLLFLSVGISIFSTIEYF. Positions 395 to 400 match the Selectivity filter motif; sequence TVGYGD. The helical transmembrane segment at 410–430 threads the bilayer; sequence IVAFMCILSGILVLALPIAII. Residues 431–503 lie on the Cytoplasmic side of the membrane; that stretch reads NDRFSACYFT…RSSGGDDFWF (73 aa).

The protein belongs to the potassium channel family. V (TC 1.A.1.2) subfamily. Kv8.1/KCNV1 sub-subfamily. Heteromultimer with KCNB1 and KCNB2. Interacts with KCNC4 and KCND1. As to expression, detected in brain, in neocortex, olfactory tubercle, hippocampus, dentate gyrus, piriform cortex and amygdala. Detected in Purkinje cells and granular cells of the cerebellum, in hippocampal CA4 neurons and neocortex pyramidal cells.

The protein localises to the cell membrane. Potassium channel subunit that does not form functional channels by itself. Modulates KCNB1 and KCNB2 channel activity by shifting the threshold for inactivation to more negative values and by slowing the rate of inactivation. Can down-regulate the channel activity of KCNB1, KCNB2, KCNC4 and KCND1, possibly by trapping them in intracellular membranes. The protein is Potassium voltage-gated channel subfamily V member 1 (Kcnv1) of Rattus norvegicus (Rat).